Here is a 217-residue protein sequence, read N- to C-terminus: Glycosylphosphatidylinositol anchor biosynthesis protein 11 (217 aa).

2 consecutive transmembrane segments (helical) span residues 45 to 65 and 68 to 88; these read TWLT…KVFN and NTAE…IFQF. N-linked (GlcNAc...) asparagine glycosylation is present at N102. A run of 4 helical transmembrane segments spans residues 107 to 127, 134 to 154, 169 to 189, and 197 to 217; these read AISI…IILF, LLWE…PAVY, YFIL…LDWD, and IPIV…GAYL.

It belongs to the PIGF family.

Its subcellular location is the endoplasmic reticulum membrane. It functions in the pathway glycolipid biosynthesis; glycosylphosphatidylinositol-anchor biosynthesis. Acts in the GPI biosynthetic pathway between GlcNAc-PI synthesis and GPI transfer to protein. This Candida glabrata (strain ATCC 2001 / BCRC 20586 / JCM 3761 / NBRC 0622 / NRRL Y-65 / CBS 138) (Yeast) protein is Glycosylphosphatidylinositol anchor biosynthesis protein 11 (GPI11).